The following is a 220-amino-acid chain: Ribonuclease P protein component 3 (220 aa).

Belongs to the eukaryotic/archaeal RNase P protein component 3 family. In terms of assembly, consists of a catalytic RNA component and at least 4-5 protein subunits.

Its subcellular location is the cytoplasm. The enzyme catalyses Endonucleolytic cleavage of RNA, removing 5'-extranucleotides from tRNA precursor.. Part of ribonuclease P, a protein complex that generates mature tRNA molecules by cleaving their 5'-ends. The sequence is that of Ribonuclease P protein component 3 from Thermococcus kodakarensis (strain ATCC BAA-918 / JCM 12380 / KOD1) (Pyrococcus kodakaraensis (strain KOD1)).